Reading from the N-terminus, the 184-residue chain is ATP synthase subunit b, chloroplastic (184 aa).

A helical membrane pass occupies residues 27–49 (LATNPINLSVVFGVLIFFGKGVL).

The protein belongs to the ATPase B chain family. In terms of assembly, F-type ATPases have 2 components, F(1) - the catalytic core - and F(0) - the membrane proton channel. F(1) has five subunits: alpha(3), beta(3), gamma(1), delta(1), epsilon(1). F(0) has four main subunits: a(1), b(1), b'(1) and c(10-14). The alpha and beta chains form an alternating ring which encloses part of the gamma chain. F(1) is attached to F(0) by a central stalk formed by the gamma and epsilon chains, while a peripheral stalk is formed by the delta, b and b' chains.

The protein localises to the plastid. Its subcellular location is the chloroplast thylakoid membrane. In terms of biological role, f(1)F(0) ATP synthase produces ATP from ADP in the presence of a proton or sodium gradient. F-type ATPases consist of two structural domains, F(1) containing the extramembraneous catalytic core and F(0) containing the membrane proton channel, linked together by a central stalk and a peripheral stalk. During catalysis, ATP synthesis in the catalytic domain of F(1) is coupled via a rotary mechanism of the central stalk subunits to proton translocation. Component of the F(0) channel, it forms part of the peripheral stalk, linking F(1) to F(0). In Nasturtium officinale (Watercress), this protein is ATP synthase subunit b, chloroplastic.